Here is a 147-residue protein sequence, read N- to C-terminus: MFDGIGFMELLLIGVLGLVVLGPERLPVAVRSVTSWIRAMKRMANSVKEELEQELKIEQLHADLKKAESKGLSNLSPELQESIDQLKQAAQSVNRPYQVQDVPAPENQIHNPASQSVSTEASPSASSAPTSESNQGEDTRSNPKANG.

A helical transmembrane segment spans residues 2–22 (FDGIGFMELLLIGVLGLVVLG). Over residues 85–97 (QLKQAAQSVNRPY) the composition is skewed to polar residues. A disordered region spans residues 85 to 147 (QLKQAAQSVN…DTRSNPKANG (63 aa)). A compositionally biased stretch (low complexity) spans 113 to 133 (ASQSVSTEASPSASSAPTSES).

It belongs to the TatB family. As to quaternary structure, the Tat system comprises two distinct complexes: a TatABC complex, containing multiple copies of TatA, TatB and TatC subunits, and a separate TatA complex, containing only TatA subunits. Substrates initially bind to the TatABC complex, which probably triggers association of the separate TatA complex to form the active translocon.

The protein localises to the cell inner membrane. Part of the twin-arginine translocation (Tat) system that transports large folded proteins containing a characteristic twin-arginine motif in their signal peptide across membranes. Together with TatC, TatB is part of a receptor directly interacting with Tat signal peptides. TatB may form an oligomeric binding site that transiently accommodates folded Tat precursor proteins before their translocation. The chain is Sec-independent protein translocase protein TatB from Shewanella sp. (strain ANA-3).